Here is a 138-residue protein sequence, read N- to C-terminus: MAELQQLRVQEAVESMVKSLERENIRKMQGLMFRCSASCCEDSQASMKQVHQCIERCHVPLAQAQALVTSELEKFQDRLARCTMHCNDKAKDSIDAGSKELQVKQQLDSCVTKCVDDHMHLIPTMTKKMKEALLSIGK.

A2 is modified (N-acetylalanine). T124 and T126 each carry phosphothreonine.

Belongs to the FAM136 family.

This chain is Protein FAM136A (FAM136A), found in Homo sapiens (Human).